The primary structure comprises 432 residues: Homogentisate 1,2-dioxygenase (432 aa).

Histidine 287 serves as the catalytic Proton acceptor. Histidine 330 and glutamate 336 together coordinate Fe cation. Residues tyrosine 345 and histidine 366 each coordinate homogentisate. A Fe cation-binding site is contributed by histidine 366.

The protein belongs to the homogentisate dioxygenase family. As to quaternary structure, hexamer; dimer of trimers. The cofactor is Fe cation.

It carries out the reaction homogentisate + O2 = 4-maleylacetoacetate + H(+). It functions in the pathway amino-acid degradation; L-phenylalanine degradation; acetoacetate and fumarate from L-phenylalanine: step 4/6. Its function is as follows. Involved in the catabolism of homogentisate (2,5-dihydroxyphenylacetate or 2,5-OH-PhAc), a central intermediate in the degradation of phenylalanine and tyrosine. Catalyzes the oxidative ring cleavage of the aromatic ring of homogentisate to yield maleylacetoacetate. This is Homogentisate 1,2-dioxygenase from Pseudomonas aeruginosa (strain UCBPP-PA14).